Here is a 393-residue protein sequence, read N- to C-terminus: S-adenosylmethionine synthase 3 (393 aa).

Glu9 is a binding site for Mg(2+). His15 is a binding site for ATP. Glu43 provides a ligand contact to K(+). Residues Glu56 and Gln99 each coordinate L-methionine. ATP contacts are provided by residues 167–169 (NGK), 235–238 (SGRF), Asp246, 252–253 (RK), Ala269, Lys273, and Lys277. Residue Asp246 participates in L-methionine binding. Lys277 serves as a coordination point for L-methionine.

Belongs to the AdoMet synthase family. Homotetramer. Requires Mn(2+) as cofactor. It depends on Mg(2+) as a cofactor. The cofactor is Co(2+). K(+) is required as a cofactor. Mostly expressed in flowers, seedpods and roots, and, to a lower extent, in stems and leaves.

The protein localises to the cytoplasm. It carries out the reaction L-methionine + ATP + H2O = S-adenosyl-L-methionine + phosphate + diphosphate. The protein operates within amino-acid biosynthesis; S-adenosyl-L-methionine biosynthesis; S-adenosyl-L-methionine from L-methionine: step 1/1. In terms of biological role, catalyzes the formation of S-adenosylmethionine from methionine and ATP. The reaction comprises two steps that are both catalyzed by the same enzyme: formation of S-adenosylmethionine (AdoMet) and triphosphate, and subsequent hydrolysis of the triphosphate. This Brassica juncea (Indian mustard) protein is S-adenosylmethionine synthase 3 (MSAMS3).